Here is a 263-residue protein sequence, read N- to C-terminus: Tryptophan synthase alpha chain (263 aa).

Residues glutamate 47 and aspartate 58 each act as proton acceptor in the active site.

Belongs to the TrpA family. As to quaternary structure, tetramer of two alpha and two beta chains.

Its subcellular location is the plastid. It is found in the chloroplast. It carries out the reaction (1S,2R)-1-C-(indol-3-yl)glycerol 3-phosphate + L-serine = D-glyceraldehyde 3-phosphate + L-tryptophan + H2O. The protein operates within amino-acid biosynthesis; L-tryptophan biosynthesis; L-tryptophan from chorismate: step 5/5. In terms of biological role, the alpha subunit is responsible for the aldol cleavage of indoleglycerol phosphate to indole and glyceraldehyde 3-phosphate. The protein is Tryptophan synthase alpha chain of Pyropia yezoensis (Susabi-nori).